We begin with the raw amino-acid sequence, 204 residues long: Tumor protein D53 (204 aa).

The interval 1–31 is disordered; it reads MEAQAQGLLETEPLQGRDGDAVGSADFSSML. The stretch at 22–73 forms a coiled coil; that stretch reads VGSADFSSMLSEEEKEELKAELIQLEDEITTLRQVLSAKERHLVEIKQKLGM. A phosphoserine mark is found at Ser29, Ser86, Ser122, and Ser131. Arg133 bears the Omega-N-methylarginine mark. The residue at position 146 (Thr146) is a Phosphothreonine. Residues Ser149 and Ser174 each carry the phosphoserine modification. The interval 164 to 204 is disordered; the sequence is KVGGTNHGGGSFEEVLNSTAHASSQNASAGSRQTKDEELQC. Residues 179 to 195 are compositionally biased toward polar residues; the sequence is LNSTAHASSQNASAGSR.

Belongs to the TPD52 family. In terms of assembly, forms a homodimer or heterodimer with other members of the family.

The protein is Tumor protein D53 (Tpd52l1) of Mus musculus (Mouse).